The chain runs to 403 residues: Argininosuccinate synthase (403 aa).

Residues 10 to 18 and A38 each bind ATP; that span reads AYSGGVDTS. Y89 is an L-citrulline binding site. Residue G119 participates in ATP binding. L-aspartate-binding residues include T121, N125, and D126. N125 serves as a coordination point for L-citrulline. Residues R129, S177, S186, E262, and Y274 each contribute to the L-citrulline site.

It belongs to the argininosuccinate synthase family. Type 1 subfamily. Homotetramer.

Its subcellular location is the cytoplasm. It catalyses the reaction L-citrulline + L-aspartate + ATP = 2-(N(omega)-L-arginino)succinate + AMP + diphosphate + H(+). It functions in the pathway amino-acid biosynthesis; L-arginine biosynthesis; L-arginine from L-ornithine and carbamoyl phosphate: step 2/3. The chain is Argininosuccinate synthase from Synechococcus sp. (strain CC9605).